We begin with the raw amino-acid sequence, 444 residues long: Adenylosuccinate synthetase (444 aa).

Residues 13 to 19 (GDEGKGK) and 41 to 43 (GHT) each bind GTP. Aspartate 14 acts as the Proton acceptor in catalysis. Positions 14 and 41 each coordinate Mg(2+). IMP-binding positions include 14–17 (DEGK), 39–42 (NAGH), threonine 129, arginine 143, glutamine 224, threonine 239, and arginine 303. Histidine 42 functions as the Proton donor in the catalytic mechanism. 299–305 (TTTGRRR) lines the substrate pocket. Residues arginine 305, 331-333 (KLD), and 413-415 (SLG) each bind GTP.

It belongs to the adenylosuccinate synthetase family. In terms of assembly, homodimer. Mg(2+) serves as cofactor.

The protein resides in the cytoplasm. It catalyses the reaction IMP + L-aspartate + GTP = N(6)-(1,2-dicarboxyethyl)-AMP + GDP + phosphate + 2 H(+). It functions in the pathway purine metabolism; AMP biosynthesis via de novo pathway; AMP from IMP: step 1/2. Its function is as follows. Plays an important role in the de novo pathway of purine nucleotide biosynthesis. Catalyzes the first committed step in the biosynthesis of AMP from IMP. The chain is Adenylosuccinate synthetase from Synechocystis sp. (strain ATCC 27184 / PCC 6803 / Kazusa).